The chain runs to 153 residues: Deoxyuridine 5'-triphosphate nucleotidohydrolase (153 aa).

Substrate-binding positions include 71-73 (RSG), Asn84, 88-90 (TID), and Lys98.

Belongs to the dUTPase family. It depends on Mg(2+) as a cofactor.

It catalyses the reaction dUTP + H2O = dUMP + diphosphate + H(+). Its pathway is pyrimidine metabolism; dUMP biosynthesis; dUMP from dCTP (dUTP route): step 2/2. Functionally, this enzyme is involved in nucleotide metabolism: it produces dUMP, the immediate precursor of thymidine nucleotides and it decreases the intracellular concentration of dUTP so that uracil cannot be incorporated into DNA. The chain is Deoxyuridine 5'-triphosphate nucleotidohydrolase from Ehrlichia canis (strain Jake).